The sequence spans 70 residues: Alpha-toxin Bot9 (70 aa).

Positions arginine 6 to tyrosine 69 constitute an LCN-type CS-alpha/beta domain. Disulfide bonds link cysteine 16–cysteine 68, cysteine 20–cysteine 40, cysteine 26–cysteine 50, and cysteine 30–cysteine 52.

It belongs to the long (4 C-C) scorpion toxin superfamily. Sodium channel inhibitor family. Alpha subfamily. In terms of tissue distribution, expressed by the venom gland.

It localises to the secreted. Its function is as follows. Alpha toxins bind voltage-independently at site-3 of sodium channels (Nav) and inhibit the inactivation of the activated channels, thereby blocking neuronal transmission. This toxin is active against rat Nav1.2/SCN2A and B.germanica Nav1. The protein is Alpha-toxin Bot9 of Buthus occitanus tunetanus (Common European scorpion).